The sequence spans 171 residues: Peptide methionine sulfoxide reductase MsrA (171 aa).

Cysteine 13 is an active-site residue.

The protein belongs to the MsrA Met sulfoxide reductase family.

It catalyses the reaction L-methionyl-[protein] + [thioredoxin]-disulfide + H2O = L-methionyl-(S)-S-oxide-[protein] + [thioredoxin]-dithiol. The catalysed reaction is [thioredoxin]-disulfide + L-methionine + H2O = L-methionine (S)-S-oxide + [thioredoxin]-dithiol. In terms of biological role, has an important function as a repair enzyme for proteins that have been inactivated by oxidation. Catalyzes the reversible oxidation-reduction of methionine sulfoxide in proteins to methionine. The protein is Peptide methionine sulfoxide reductase MsrA of Mycolicibacterium paratuberculosis (strain ATCC BAA-968 / K-10) (Mycobacterium paratuberculosis).